Here is an 889-residue protein sequence, read N- to C-terminus: Alanine--tRNA ligase (889 aa).

H574, H578, C682, and H686 together coordinate Zn(2+).

The protein belongs to the class-II aminoacyl-tRNA synthetase family. Requires Zn(2+) as cofactor.

The protein resides in the cytoplasm. The enzyme catalyses tRNA(Ala) + L-alanine + ATP = L-alanyl-tRNA(Ala) + AMP + diphosphate. Functionally, catalyzes the attachment of alanine to tRNA(Ala) in a two-step reaction: alanine is first activated by ATP to form Ala-AMP and then transferred to the acceptor end of tRNA(Ala). Also edits incorrectly charged Ser-tRNA(Ala) and Gly-tRNA(Ala) via its editing domain. This is Alanine--tRNA ligase from Orientia tsutsugamushi (strain Ikeda) (Rickettsia tsutsugamushi).